Here is a 362-residue protein sequence, read N- to C-terminus: MTKKTQVGLIFGGNSSEYEVSITSAGNIYKAIDKDKFDVHPIWITNSGYVASEADSYKVLEEPGYMVEKNDKTANLSNLIELASRPELDVLFPIVHGNLGEDGVLQGLFRLIDKPFVGVDVLAAAVTMDKEFTKILAQRAGVPVAKWVSIKRYEYEDAKNQKLSYDWVSGQLGTSNLFVKPSNQGSSVGITHVTDDSNYAEALAEAFKYDDKVLVEEGIVGTEVETAVLGNDHPVVSGVGQIINADNTWYSYENKYSTESTTTLQIPAQIPAETAEKVQENALKIYQITECSGMARVDSMLRESDGEVIFNELNALPGFTNISMYPKLFEEAGISYPDLITRLIRLAEERYAHKKTLLRKHD.

Residues Lys134 to Arg345 enclose the ATP-grasp domain. An ATP-binding site is contributed by Gly170 to Glu225. Mg(2+) contacts are provided by Asp298, Glu312, and Asn314.

It belongs to the D-alanine--D-alanine ligase family. It depends on Mg(2+) as a cofactor. Requires Mn(2+) as cofactor.

The protein localises to the cytoplasm. The catalysed reaction is 2 D-alanine + ATP = D-alanyl-D-alanine + ADP + phosphate + H(+). The protein operates within cell wall biogenesis; peptidoglycan biosynthesis. Cell wall formation. The sequence is that of D-alanine--D-alanine ligase from Lactobacillus delbrueckii subsp. bulgaricus (strain ATCC 11842 / DSM 20081 / BCRC 10696 / JCM 1002 / NBRC 13953 / NCIMB 11778 / NCTC 12712 / WDCM 00102 / Lb 14).